We begin with the raw amino-acid sequence, 511 residues long: Light-independent protochlorophyllide reductase subunit B (511 aa).

D36 contributes to the [4Fe-4S] cluster binding site. The active-site Proton donor is the D299. Residue 434-435 coordinates substrate; sequence GM.

This sequence belongs to the ChlB/BchB/BchZ family. Protochlorophyllide reductase is composed of three subunits; ChlL, ChlN and ChlB. Forms a heterotetramer of two ChlB and two ChlN subunits. It depends on [4Fe-4S] cluster as a cofactor.

It is found in the plastid. The protein localises to the chloroplast. The catalysed reaction is chlorophyllide a + oxidized 2[4Fe-4S]-[ferredoxin] + 2 ADP + 2 phosphate = protochlorophyllide a + reduced 2[4Fe-4S]-[ferredoxin] + 2 ATP + 2 H2O. The protein operates within porphyrin-containing compound metabolism; chlorophyll biosynthesis (light-independent). Functionally, component of the dark-operative protochlorophyllide reductase (DPOR) that uses Mg-ATP and reduced ferredoxin to reduce ring D of protochlorophyllide (Pchlide) to form chlorophyllide a (Chlide). This reaction is light-independent. The NB-protein (ChlN-ChlB) is the catalytic component of the complex. The sequence is that of Light-independent protochlorophyllide reductase subunit B from Huperzia lucidula (Shining clubmoss).